The chain runs to 38 residues: MKVRPSVKPMCEHCKIIKRQGRVMVICSANPKHKQRQG.

Belongs to the bacterial ribosomal protein bL36 family.

The chain is Large ribosomal subunit protein bL36 from Lactobacillus johnsonii (strain CNCM I-12250 / La1 / NCC 533).